A 378-amino-acid polypeptide reads, in one-letter code: uncharacterized protein (378 aa).

Positions 1–11 (MSQQTTPAEQK) are enriched in polar residues. Positions 1–33 (MSQQTTPAEQKSLQRKKPPFRADQVGSLLRSEP) are disordered.

To B.subtilis YxjH.

This is an uncharacterized protein from Bacillus subtilis (strain 168).